The following is a 124-amino-acid chain: Glycine cleavage system H protein (124 aa).

The Lipoyl-binding domain occupies 24–106 (TYTMGITDHA…YDDGWLVKFK (83 aa)). Lysine 65 is subject to N6-lipoyllysine.

It belongs to the GcvH family. As to quaternary structure, the glycine cleavage system is composed of four proteins: P, T, L and H. (R)-lipoate serves as cofactor.

The glycine cleavage system catalyzes the degradation of glycine. The H protein shuttles the methylamine group of glycine from the P protein to the T protein. This Ruthia magnifica subsp. Calyptogena magnifica protein is Glycine cleavage system H protein.